Reading from the N-terminus, the 519-residue chain is DNA damage-binding protein CMR1 (519 aa).

The interval 35–92 (AEAGLGPTGKSRAAASSKPRVKKPAPKKIKQEDIAPRRTSSRLKGIEADSEKAKRKAE) is disordered. Over residues 53–62 (PRVKKPAPKK) the composition is skewed to basic residues. Over residues 78–92 (KGIEADSEKAKRKAE) the composition is skewed to basic and acidic residues. WD repeat units follow at residues 240–280 (PHTR…AVEV), 287–327 (NEDQ…DQAE), 331–371 (LSEK…GKGD), 380–420 (EHES…EWAT), 442–485 (GRWV…LAQL), and 488–519 (DGITAVPAVAKFHPTLDWVAAGTASGKLCLWM).

The protein belongs to the WD repeat DDB2/WDR76 family.

Its function is as follows. DNA-binding protein that binds to both single- and double-stranded DNA. Binds preferentially to UV-damaged DNA. May be involved in DNA-metabolic processes. This chain is DNA damage-binding protein CMR1, found in Phaeosphaeria nodorum (strain SN15 / ATCC MYA-4574 / FGSC 10173) (Glume blotch fungus).